The chain runs to 416 residues: Squalene synthase (416 aa).

Helical transmembrane passes span 285-304 and 386-406; these read VINF…NACY and FISY…FLIA.

This sequence belongs to the phytoene/squalene synthase family. The cofactor is Mg(2+).

It localises to the endoplasmic reticulum membrane. The enzyme catalyses 2 (2E,6E)-farnesyl diphosphate + NADPH + H(+) = squalene + 2 diphosphate + NADP(+). The catalysed reaction is 2 (2E,6E)-farnesyl diphosphate + NADH + H(+) = squalene + 2 diphosphate + NAD(+). Its pathway is terpene metabolism; lanosterol biosynthesis; lanosterol from farnesyl diphosphate: step 1/3. The sequence is that of Squalene synthase (fdfT) from Dictyostelium discoideum (Social amoeba).